A 244-amino-acid polypeptide reads, in one-letter code: UPF0280 protein MJ1526 (244 aa).

It belongs to the UPF0280 family.

This is UPF0280 protein MJ1526 from Methanocaldococcus jannaschii (strain ATCC 43067 / DSM 2661 / JAL-1 / JCM 10045 / NBRC 100440) (Methanococcus jannaschii).